A 565-amino-acid polypeptide reads, in one-letter code: Adenine deaminase 1 (565 aa).

This sequence belongs to the metallo-dependent hydrolases superfamily. Adenine deaminase family. Mn(2+) is required as a cofactor.

The catalysed reaction is adenine + H2O + H(+) = hypoxanthine + NH4(+). The protein is Adenine deaminase 1 of Rhizobium meliloti (strain 1021) (Ensifer meliloti).